We begin with the raw amino-acid sequence, 194 residues long: Gonadal protein gdl (194 aa).

Belongs to the gonadal family. As to expression, in stage 6-14 egg chamber nurse cells and oocytes of adult females and spermatocyte cysts and bundles of maturing sperm of larval, pupal and adult males.

This chain is Gonadal protein gdl (gdl), found in Drosophila melanogaster (Fruit fly).